A 393-amino-acid chain; its full sequence is Carbamoyl phosphate synthase small chain (393 aa).

The segment at 1-194 is CPSase; sequence MSKDTTTYQG…TYVIEAEGEE (194 aa). L-glutamine is bound by residues serine 61, glycine 245, and glycine 247. The 196-residue stretch at 195-390 folds into the Glutamine amidotransferase type-1 domain; that stretch reads RHTVVAYDLG…VELMDADAQK (196 aa). Cysteine 273 acts as the Nucleophile in catalysis. L-glutamine contacts are provided by phenylalanine 274, glutamine 277, asparagine 315, glycine 317, and phenylalanine 318. Active-site residues include histidine 363 and glutamate 365.

Belongs to the CarA family. As to quaternary structure, composed of two chains; the small (or glutamine) chain promotes the hydrolysis of glutamine to ammonia, which is used by the large (or ammonia) chain to synthesize carbamoyl phosphate. Tetramer of heterodimers (alpha,beta)4.

It catalyses the reaction hydrogencarbonate + L-glutamine + 2 ATP + H2O = carbamoyl phosphate + L-glutamate + 2 ADP + phosphate + 2 H(+). It carries out the reaction L-glutamine + H2O = L-glutamate + NH4(+). Its pathway is amino-acid biosynthesis; L-arginine biosynthesis; carbamoyl phosphate from bicarbonate: step 1/1. The protein operates within pyrimidine metabolism; UMP biosynthesis via de novo pathway; (S)-dihydroorotate from bicarbonate: step 1/3. In terms of biological role, small subunit of the glutamine-dependent carbamoyl phosphate synthetase (CPSase). CPSase catalyzes the formation of carbamoyl phosphate from the ammonia moiety of glutamine, carbonate, and phosphate donated by ATP, constituting the first step of 2 biosynthetic pathways, one leading to arginine and/or urea and the other to pyrimidine nucleotides. The small subunit (glutamine amidotransferase) binds and cleaves glutamine to supply the large subunit with the substrate ammonia. The sequence is that of Carbamoyl phosphate synthase small chain from Corynebacterium glutamicum (strain ATCC 13032 / DSM 20300 / JCM 1318 / BCRC 11384 / CCUG 27702 / LMG 3730 / NBRC 12168 / NCIMB 10025 / NRRL B-2784 / 534).